Reading from the N-terminus, the 329-residue chain is MELHILEHRLKVASIAKENIQLFTYGLIKLAFLSSKTRCKFFSLTETPEDYTIIVDEEGFLELPSSEHLSVADATWLALNVVSGGGSSSSSQPIGVTKIAKSVIAPLADQNISVFMLSTYQTDFILVRERDLPFVMHTLAAEFTILQVVNGETVAADNLGVTNGFVKPKLVQRPVIHPLSSPSNMFCVTSLDPYTLPTVTTLLMDVMFYSNGVKDSVVGSEEPDHIRFFSFSLIEGYISLVMDVQTQQRFPSNLLFTSASGELWKMVRIGGQPLGFDECGIVAQISEPLAAADIPAYYISTFKFDHALVPEENINGVINALQVSQAEKH.

2 consecutive ACT domains span residues 72-139 (ADAT…MHTL) and 262-322 (ELWK…NALQ).

This sequence belongs to the GATS family. As to quaternary structure, may form homodimers and heterodimers.

Its subcellular location is the cytoplasm. It localises to the cytosol. Its function is as follows. Functions as a negative regulator of the TORC1 signaling pathway. In Xenopus laevis (African clawed frog), this protein is Cytosolic arginine sensor for mTORC1 subunit 2.